The chain runs to 307 residues: Heme A synthase (307 aa).

The Cytoplasmic segment spans residues 1–8 (MQHNRYLK). A helical membrane pass occupies residues 9 to 29 (WFAVAATVGMLLILLGGALVT). Residues 30 to 56 (KTDSGLGCGRNWPDCNGSLIPKEITPE) lie on the Extracellular side of the membrane. A disulfide bond links C37 and C44. Residues 57 to 77 (VLIEFSHRLVTGVVSISILVL) form a helical membrane-spanning segment. Residue E60 is part of the active site. H63 is a heme o binding site. Over 78-92 (TVWTWRKLGHIREVK) the chain is Cytoplasmic. A helical transmembrane segment spans residues 93-113 (LLGFLAMFFLIAQALIGAAQV). Residues 114–123 (LWGQGDFILA) lie on the Extracellular side of the membrane. The chain crosses the membrane as a helical span at residues 124-144 (LHFGISLISFAAVLLLSMIVF). A heme o-binding site is contributed by H125. Topologically, residues 145–161 (EVDRKFDADNVFIGKKL) are cytoplasmic. Residues 162–182 (RWHTIAVTIYSYLVVYTGALV) traverse the membrane as a helical segment. At 183-218 (RHTDSSLICPDWPFCYNETPLASPNNMYEWVQMGHR) the chain is on the extracellular side. An intrachain disulfide couples C191 to C197. H217 provides a ligand contact to heme b. Residues 219–239 (LAVLIIFIWIAYITWHAVKEY) form a helical membrane-spanning segment. The Cytoplasmic portion of the chain corresponds to 240 to 247 (KNQRVVYY). The helical transmembrane segment at 248-268 (GWIIAFTIVFLQVIAGMLVVL) threads the bilayer. The Extracellular segment spans residues 269-276 (TKLNLTVA). A helical membrane pass occupies residues 277–297 (LMHSLLISLLFGLLCYMIMLV). H279 provides a ligand contact to heme b. Over 298–307 (ARSNYNEKMK) the chain is Cytoplasmic.

It belongs to the COX15/CtaA family. Type 1 subfamily. In terms of assembly, interacts with CtaB. Requires heme b as cofactor.

The protein localises to the cell membrane. The enzyme catalyses Fe(II)-heme o + 2 A + H2O = Fe(II)-heme a + 2 AH2. It functions in the pathway porphyrin-containing compound metabolism; heme A biosynthesis; heme A from heme O: step 1/1. Functionally, catalyzes the conversion of heme O to heme A by two successive hydroxylations of the methyl group at C8. The first hydroxylation forms heme I, the second hydroxylation results in an unstable dihydroxymethyl group, which spontaneously dehydrates, resulting in the formyl group of heme A. In Lysinibacillus sphaericus (strain C3-41), this protein is Heme A synthase.